The primary structure comprises 537 residues: LEQSSRYADLTLDEAGSLRNGEHVLVAYIMKPKMGYDYLATAAHFAAESCTGARSTDDAKESANAVVYYIDADSQEMRIAYPTVLFDSNLTDGRDMVRSFLTLAIGNTQGMEDVEFGKIYDFYLPPSFLRLQESPSVNTMWRILDKGASNGGLAAGAMKPKLGMQPKPFRAASYALWQGGAYTTADVQANQAPTQASEGIPEVVKAMRSCVQGTDVAKRHSGGNYTDEPKEMDARGKYVLSQFGPFSGNCVSLVAGYAAGGSARHTFPRQFVHYHRAGQASTSSPQTQRGYSAFVHTKISQVISTTSIHADTMSFGKTQGDSPDKSIAVMLQDDAADARLCNQEWEGMRQNAPIISGSMNALRLPAFFETLGNSNVILTADSGSFGHKDGPASGAIACRQVEEAWKAWRSGQYGNVSLSDGVVEFAKTHEEIKGAFLTFPKDADEIYPGWKEKLGCTAEASVPPASFVNAKISTASSAAVATARTTMNAAKMASQSTAGSAVNPYTGGLKSIHPASSSNTARTVLLSRQGREAALQD.

Belongs to the RuBisCO large chain family. Type IV subfamily.

Functionally, unknown. Probably does not have RuBisCO activity. This is an uncharacterized protein from Symbiodinium sp. (Dinoflagellate).